The following is a 670-amino-acid chain: Methionine--tRNA ligase (670 aa).

Residues 14–24 (PYANGHLHLGH) carry the 'HIGH' region motif. Positions 145, 148, 158, and 161 each coordinate Zn(2+). Residues 330–334 (KMSKS) carry the 'KMSKS' region motif. Lys333 contributes to the ATP binding site. The tRNA-binding domain maps to 570–670 (DFAKVDLRIA…AGAFPGMKVK (101 aa)).

This sequence belongs to the class-I aminoacyl-tRNA synthetase family. MetG type 1 subfamily. Homodimer. Requires Zn(2+) as cofactor.

The protein localises to the cytoplasm. The catalysed reaction is tRNA(Met) + L-methionine + ATP = L-methionyl-tRNA(Met) + AMP + diphosphate. Functionally, is required not only for elongation of protein synthesis but also for the initiation of all mRNA translation through initiator tRNA(fMet) aminoacylation. This is Methionine--tRNA ligase from Legionella pneumophila (strain Corby).